A 296-amino-acid chain; its full sequence is MSHPVFVRPELVVDNVTVTYNNGHTAIYDASFSLTGGTICALVGVNGSGKSTLFKSIMGLVKPSVGKVELSHKPISHALKQNTIAYVPQTEDVDWNFPVLVEDVVMMGRYGKMNFLRIPSREDKAIVNKSIERVGLTALRSRQIGELSGGQKKRVFLARALAQQGTLLLLDEPFTGVDVKTENAIIELLQSLRDEGHLILVSTHNLGSVPEFCDHVILINQTVLAAGPIETTFTQKNLEMTFGGVLRHINLSGTALHDDNDPRTVTVITDDERPAVFYGHTKNDPPAQSQSKEQNS.

One can recognise an ABC transporter domain in the interval 11–246; it reads LVVDNVTVTY…NLEMTFGGVL (236 aa). 44–51 provides a ligand contact to ATP; the sequence is GVNGSGKS. The disordered stretch occupies residues 276 to 296; it reads VFYGHTKNDPPAQSQSKEQNS. Over residues 286–296 the composition is skewed to polar residues; it reads PAQSQSKEQNS.

The protein belongs to the ABC transporter superfamily.

Its subcellular location is the cell inner membrane. Its function is as follows. Part of an ATP-driven transport system YfeABCD for chelated iron. This Yersinia pestis protein is Chelated iron transport system membrane protein YfeB (yfeB).